Reading from the N-terminus, the 205-residue chain is Probable calcium-binding protein CML41 (205 aa).

Positions 26–55 (SFQNRRRSPKSNSSSTLNSPRSNSDDNNNI) are disordered. The span at 35-54 (KSNSSSTLNSPRSNSDDNNN) shows a compositional bias: low complexity. EF-hand domains lie at 60–95 (ASKE…VGEY), 96–131 (ISHE…RDLY), 137–173 (DGDG…LGES), and 174–205 (RTYG…MMTV). Residues aspartate 73, aspartate 75, aspartate 77, lysine 79, glutamate 84, aspartate 109, aspartate 111, aspartate 113, serine 115, and aspartate 120 each contribute to the Ca(2+) site. Aspartate 187, aspartate 189, asparagine 191, and glutamate 198 together coordinate Ca(2+).

Potential calcium sensor. The polypeptide is Probable calcium-binding protein CML41 (CML41) (Arabidopsis thaliana (Mouse-ear cress)).